A 267-amino-acid chain; its full sequence is MKEIKEAYQQCGQIVGEYAPACFKALSYLPLKQRQASWAVLSFCHTAASADEKVLPAFEAKADHVYQRTNNGKQHLWKAFDHAYRTFTLESEPFREFIAAQKEDAKPYDDLDELLMYAYRTGGAAGLMLLPILTRRKQDQLKQAAVSLGLAIQLVRFLSDLGTDQQKNRIPRQVMQQFGYTEADLQKGTVNKAFTMTWEYIAFEAEAYLEECQDALPLFPQYSQKTVKAALHLHRAVLEKIRAKQHDVFQYHFALTETEVKQILSDI.

This sequence belongs to the phytoene/squalene synthase family. In terms of assembly, monomer.

The catalysed reaction is (2E,6E)-farnesyl diphosphate + H2O = (2E,6E)-farnesol + diphosphate. Its activity is regulated as follows. Diphosphate release from FPP is inhibited by zaragozic acid. Its function is as follows. A farnesyl diphosphate (FPP) phosphatase. Involved in biofilm formation, its disruption blocks biofilm synthesis which is restored by exogenous farnesol. Releases diphosphate from FPP, was initally suggested to be a squalene synthase. Diphosphate release is higher from FPP than geranyl pyrophosphate (GPP) or geranylgeranyl pyrophosphate (GGPP). Biofilm synthesis is partially restored by exogenous squalene, beta-carotene or retinol. Required for integrity of cell membrane lipid rafts. Involved in spatial organization of membranes, required for the flotillin-like proteins FloT and FloA to function correctly. The sequence is that of Farnesyl diphosphate phosphatase YisP (yisP) from Bacillus subtilis (strain 168).